Consider the following 470-residue polypeptide: MNYTIDTVVAISTPPGRGGIGIIRISGKSVPEIAPKLLGKIPNPRKAEYLPFLDTDGSILERVIALFFPEPNSFTGENILEIHGHGGQIILDILLERILKTSSDIRIAHPGEFTKRAFLNNKIDLVQAEAIADIIDATSYQAAKSASNSLQGIFSRKIYIILEQLTNLRMYAESSIDFSEDEISIIPYEDIKKKLRNIISDVQKMYKSTYHGVLLREGIKIVIAGKPNAGKSSLFNALVGIDRAIISTISGTTRDTLHEYIQLNGIAFHITDTAGLQKKSDNEIEQIGMKRTWEELSNADHILWVIDPNDVTNKENDITLKHVEKVLFCKNKKTPITIIHNKSDLTKNQIGISIINNYTIITLSALFNDGTDLLQEYLSNNIKSKIQQDCKSNLSENQGNFIARRRHLNALEKSSKYLFSAQTQLLSTMSINELFAEDLGLAHKELSKIFGKFTPDDLLKRIFSTFCIGK.

(6S)-5-formyl-5,6,7,8-tetrahydrofolate-binding residues include arginine 24, glutamate 81, and lysine 122. A TrmE-type G domain is found at 218–383 (GIKIVIAGKP…LQEYLSNNIK (166 aa)). Asparagine 228 is a binding site for K(+). GTP contacts are provided by residues 228–233 (NAGKSS), 247–253 (STISGTT), and 272–275 (DTAG). Serine 232 is a Mg(2+) binding site. Serine 247, isoleucine 249, and threonine 252 together coordinate K(+). A Mg(2+)-binding site is contributed by threonine 253. Lysine 470 contacts (6S)-5-formyl-5,6,7,8-tetrahydrofolate.

Belongs to the TRAFAC class TrmE-Era-EngA-EngB-Septin-like GTPase superfamily. TrmE GTPase family. As to quaternary structure, homodimer. Heterotetramer of two MnmE and two MnmG subunits. It depends on K(+) as a cofactor.

The protein resides in the cytoplasm. Its function is as follows. Exhibits a very high intrinsic GTPase hydrolysis rate. Involved in the addition of a carboxymethylaminomethyl (cmnm) group at the wobble position (U34) of certain tRNAs, forming tRNA-cmnm(5)s(2)U34. The chain is tRNA modification GTPase MnmE from Blochmanniella pennsylvanica (strain BPEN).